We begin with the raw amino-acid sequence, 1420 residues long: DNA-directed RNA polymerase subunit beta' (1420 aa).

Zn(2+)-binding residues include cysteine 70, cysteine 72, cysteine 85, and cysteine 88. Mg(2+) is bound by residues aspartate 464, aspartate 466, and aspartate 468. Residues cysteine 823, cysteine 897, cysteine 904, and cysteine 907 each coordinate Zn(2+).

Belongs to the RNA polymerase beta' chain family. As to quaternary structure, the RNAP catalytic core consists of 2 alpha, 1 beta, 1 beta' and 1 omega subunit. When a sigma factor is associated with the core the holoenzyme is formed, which can initiate transcription. It depends on Mg(2+) as a cofactor. The cofactor is Zn(2+).

It catalyses the reaction RNA(n) + a ribonucleoside 5'-triphosphate = RNA(n+1) + diphosphate. DNA-dependent RNA polymerase catalyzes the transcription of DNA into RNA using the four ribonucleoside triphosphates as substrates. In Polynucleobacter necessarius subsp. necessarius (strain STIR1), this protein is DNA-directed RNA polymerase subunit beta'.